A 115-amino-acid polypeptide reads, in one-letter code: Large ribosomal subunit protein uL18 (115 aa).

Residues 1–24 form a disordered region; sequence MISKPDKNKLRQKRHTRVRGKISG. Residues 10-20 are compositionally biased toward basic residues; it reads LRQKRHTRVRG.

This sequence belongs to the universal ribosomal protein uL18 family. As to quaternary structure, part of the 50S ribosomal subunit; part of the 5S rRNA/L5/L18/L25 subcomplex. Contacts the 5S and 23S rRNAs.

This is one of the proteins that bind and probably mediate the attachment of the 5S RNA into the large ribosomal subunit, where it forms part of the central protuberance. The protein is Large ribosomal subunit protein uL18 of Lactococcus lactis subsp. cremoris (strain MG1363).